The following is a 393-amino-acid chain: UDP-sulfoquinovose synthase (393 aa).

NAD(+) contacts are provided by residues 31 to 35, 74 to 75, Arg-100, and Asn-118; these read DNLST and DI. Position 100 (Arg-100) interacts with substrate. The substrate site is built by Thr-144 and Tyr-182. Thr-144 is an active-site residue. NAD(+)-binding residues include Tyr-182 and Lys-186. Tyr-182 (proton acceptor) is an active-site residue. Residue Lys-186 is part of the active site. A substrate-binding site is contributed by Gln-209. Val-212 serves as a coordination point for NAD(+). Substrate is bound by residues 238-241, 253-255, and 326-328; these read VVNR, TVY, and RVE.

It belongs to the NAD(P)-dependent epimerase/dehydratase family. It depends on NAD(+) as a cofactor.

It catalyses the reaction sulfite + UDP-alpha-D-glucose + H(+) = UDP-alpha-D-6-sulfoquinovose + H2O. Catalyzes the biosynthesis of UDP-sulfoquinovose by the transfer of sulfite to UDP-glucose. Important for the assembly of the S-layer N-glycans. The reaction probably occurs through an NAD(+)-dependent oxidation/dehydration/enolization/sulfite addition process. In vitro, in the absence of sulfite, UDP-D-glucose is converted via UDP-4-keto-D-glucose to UDP-D-glucose-5,6-ene. This chain is UDP-sulfoquinovose synthase, found in Sulfolobus acidocaldarius (strain ATCC 33909 / DSM 639 / JCM 8929 / NBRC 15157 / NCIMB 11770).